The primary structure comprises 216 residues: ATP phosphoribosyltransferase (216 aa).

Belongs to the ATP phosphoribosyltransferase family. Short subfamily. Heteromultimer composed of HisG and HisZ subunits.

The protein resides in the cytoplasm. The catalysed reaction is 1-(5-phospho-beta-D-ribosyl)-ATP + diphosphate = 5-phospho-alpha-D-ribose 1-diphosphate + ATP. It functions in the pathway amino-acid biosynthesis; L-histidine biosynthesis; L-histidine from 5-phospho-alpha-D-ribose 1-diphosphate: step 1/9. Catalyzes the condensation of ATP and 5-phosphoribose 1-diphosphate to form N'-(5'-phosphoribosyl)-ATP (PR-ATP). Has a crucial role in the pathway because the rate of histidine biosynthesis seems to be controlled primarily by regulation of HisG enzymatic activity. This Nitrosomonas europaea (strain ATCC 19718 / CIP 103999 / KCTC 2705 / NBRC 14298) protein is ATP phosphoribosyltransferase.